A 403-amino-acid chain; its full sequence is Na(+)/H(+) antiporter NhaA (403 aa).

The next 11 helical transmembrane spans lie at 23-43, 66-86, 101-121, 132-152, 161-181, 184-204, 219-239, 257-277, 297-317, 333-353, and 363-383; these read AFFL…PWAA, VAAW…ILEI, VALP…TYLL, GWAI…LALG, AWLM…IALF, GSMY…LIGA, GILL…AGVI, WVSS…FGFM, LGIM…ATLL, GMLF…LFVA, and IAPA…TGWF.

Belongs to the NhaA Na(+)/H(+) (TC 2.A.33) antiporter family.

Its subcellular location is the cell inner membrane. It catalyses the reaction Na(+)(in) + 2 H(+)(out) = Na(+)(out) + 2 H(+)(in). Functionally, na(+)/H(+) antiporter that extrudes sodium in exchange for external protons. The chain is Na(+)/H(+) antiporter NhaA from Gluconobacter oxydans (strain 621H) (Gluconobacter suboxydans).